The primary structure comprises 658 residues: Integrator complex subunit 9 (658 aa).

The disordered stretch occupies residues 550 to 574 (KHVLQLPPKPPQPPTSKKRKRVSDD). The Nuclear localization signal motif lies at 566–570 (KKRKR).

The protein belongs to the metallo-beta-lactamase superfamily. RNA-metabolizing metallo-beta-lactamase-like family. INTS9 subfamily. As to quaternary structure, component of the Integrator complex, composed of core subunits INTS1, INTS2, INTS3, INTS4, INTS5, INTS6, INTS7, INTS8, INTS9/RC74, INTS10, INTS11/CPSF3L, INTS12, INTS13, INTS14 and INTS15. The core complex associates with protein phosphatase 2A subunits PPP2CA and PPP2R1A, to form the Integrator-PP2A (INTAC) complex. INTS9 is part of the RNA endonuclease subcomplex, composed of INTS4, INTS9, INTS11 and inositol hexakisphosphate (InsP6).

It is found in the nucleus. It localises to the cytoplasm. In terms of biological role, component of the integrator complex, a multiprotein complex that terminates RNA polymerase II (Pol II) transcription in the promoter-proximal region of genes. The integrator complex provides a quality checkpoint during transcription elongation by driving premature transcription termination of transcripts that are unfavorably configured for transcriptional elongation: the complex terminates transcription by (1) catalyzing dephosphorylation of the C-terminal domain (CTD) of Pol II subunit POLR2A/RPB1 and SUPT5H/SPT5, (2) degrading the exiting nascent RNA transcript via endonuclease activity and (3) promoting the release of Pol II from bound DNA. The integrator complex is also involved in terminating the synthesis of non-coding Pol II transcripts, such as enhancer RNAs (eRNAs), small nuclear RNAs (snRNAs), telomerase RNAs and long non-coding RNAs (lncRNAs). The polypeptide is Integrator complex subunit 9 (INTS9) (Gallus gallus (Chicken)).